Here is a 290-residue protein sequence, read N- to C-terminus: Pyridoxal kinase PdxY (290 aa).

Substrate-binding positions include Ser-9 and 44-45; that span reads TQ. Residues Asp-112, Val-144, Glu-149, and Lys-182 each contribute to the ATP site. Residue Asp-221 participates in substrate binding.

This sequence belongs to the pyridoxine kinase family. PdxY subfamily. As to quaternary structure, homodimer. Requires Mg(2+) as cofactor.

The enzyme catalyses pyridoxal + ATP = pyridoxal 5'-phosphate + ADP + H(+). The protein operates within cofactor metabolism; pyridoxal 5'-phosphate salvage; pyridoxal 5'-phosphate from pyridoxal: step 1/1. Pyridoxal kinase involved in the salvage pathway of pyridoxal 5'-phosphate (PLP). Catalyzes the phosphorylation of pyridoxal to PLP. This Vibrio vulnificus (strain CMCP6) protein is Pyridoxal kinase PdxY.